Here is a 108-residue protein sequence, read N- to C-terminus: Tetrahydromethanopterin S-methyltransferase subunit B (108 aa).

A helical transmembrane segment spans residues 81 to 101 (FFGFWISLSILTLGLILVIGL).

The protein belongs to the MtrB family. In terms of assembly, the complex is composed of 8 subunits; MtrA, MtrB, MtrC, MtrD, MtrE, MtrF, MtrG and MtrH.

The protein resides in the cell membrane. It catalyses the reaction 5-methyl-5,6,7,8-tetrahydromethanopterin + coenzyme M + 2 Na(+)(in) = 5,6,7,8-tetrahydromethanopterin + methyl-coenzyme M + 2 Na(+)(out). It participates in one-carbon metabolism; methanogenesis from CO(2); methyl-coenzyme M from 5,10-methylene-5,6,7,8-tetrahydromethanopterin: step 2/2. Its function is as follows. Part of a complex that catalyzes the formation of methyl-coenzyme M and tetrahydromethanopterin from coenzyme M and methyl-tetrahydromethanopterin. This is an energy-conserving, sodium-ion translocating step. The chain is Tetrahydromethanopterin S-methyltransferase subunit B from Methanococcus aeolicus (strain ATCC BAA-1280 / DSM 17508 / OCM 812 / Nankai-3).